The primary structure comprises 163 residues: Transcriptional repressor NrdR (163 aa).

Residues cysteine 3 to cysteine 34 fold into a zinc finger. The ATP-cone domain occupies tyrosine 49 to glutamate 139.

It belongs to the NrdR family. Requires Zn(2+) as cofactor.

Its function is as follows. Negatively regulates transcription of bacterial ribonucleotide reductase nrd genes and operons by binding to NrdR-boxes. The polypeptide is Transcriptional repressor NrdR (Koribacter versatilis (strain Ellin345)).